We begin with the raw amino-acid sequence, 456 residues long: Trigger factor (456 aa).

The PPIase FKBP-type domain maps to Gly192–Pro277.

Belongs to the FKBP-type PPIase family. Tig subfamily.

The protein resides in the cytoplasm. The enzyme catalyses [protein]-peptidylproline (omega=180) = [protein]-peptidylproline (omega=0). In terms of biological role, involved in protein export. Acts as a chaperone by maintaining the newly synthesized protein in an open conformation. Functions as a peptidyl-prolyl cis-trans isomerase. The polypeptide is Trigger factor (Streptococcus pyogenes serotype M12 (strain MGAS9429)).